Reading from the N-terminus, the 352-residue chain is Histidine biosynthesis bifunctional protein HisB (352 aa).

The histidinol-phosphatase stretch occupies residues 1 to 164 (MSQKILFIDR…EIENEILSSF (164 aa)). Residue Asp-9 is the Nucleophile of the active site. The Mg(2+) site is built by Asp-9 and Asp-11. Residue Asp-11 is the Proton donor of the active site. Zn(2+)-binding residues include Cys-93, His-95, Cys-101, and Cys-103. Asp-130 contributes to the Mg(2+) binding site. Residues 165–352 (RSASYQRTTK…ENLASSKGVI (188 aa)) are imidazoleglycerol-phosphate dehydratase.

In the N-terminal section; belongs to the histidinol-phosphatase family. It in the C-terminal section; belongs to the imidazoleglycerol-phosphate dehydratase family. It depends on Mg(2+) as a cofactor. Requires Zn(2+) as cofactor.

The protein localises to the cytoplasm. The enzyme catalyses D-erythro-1-(imidazol-4-yl)glycerol 3-phosphate = 3-(imidazol-4-yl)-2-oxopropyl phosphate + H2O. The catalysed reaction is L-histidinol phosphate + H2O = L-histidinol + phosphate. Its pathway is amino-acid biosynthesis; L-histidine biosynthesis; L-histidine from 5-phospho-alpha-D-ribose 1-diphosphate: step 6/9. It functions in the pathway amino-acid biosynthesis; L-histidine biosynthesis; L-histidine from 5-phospho-alpha-D-ribose 1-diphosphate: step 8/9. This is Histidine biosynthesis bifunctional protein HisB from Campylobacter jejuni subsp. jejuni serotype O:23/36 (strain 81-176).